Reading from the N-terminus, the 353-residue chain is RNA 3'-terminal phosphate cyclase (353 aa).

ATP contacts are provided by residues Q100 and H285 to Q289. The Tele-AMP-histidine intermediate role is filled by H311.

This sequence belongs to the RNA 3'-terminal cyclase family. Type 1 subfamily.

Its subcellular location is the cytoplasm. It carries out the reaction a 3'-end 3'-phospho-ribonucleotide-RNA + ATP = a 3'-end 2',3'-cyclophospho-ribonucleotide-RNA + AMP + diphosphate. Functionally, catalyzes the conversion of 3'-phosphate to a 2',3'-cyclic phosphodiester at the end of RNA. The mechanism of action of the enzyme occurs in 3 steps: (A) adenylation of the enzyme by ATP; (B) transfer of adenylate to an RNA-N3'P to produce RNA-N3'PP5'A; (C) and attack of the adjacent 2'-hydroxyl on the 3'-phosphorus in the diester linkage to produce the cyclic end product. The biological role of this enzyme is unknown but it is likely to function in some aspects of cellular RNA processing. This chain is RNA 3'-terminal phosphate cyclase, found in Nitrosospira multiformis (strain ATCC 25196 / NCIMB 11849 / C 71).